We begin with the raw amino-acid sequence, 463 residues long: L-seryl-tRNA(Sec) selenium transferase (463 aa).

An N6-(pyridoxal phosphate)lysine modification is found at K295.

It belongs to the SelA family. In terms of assembly, homodecamer; pentamer of dimers. Binds only one seryl-tRNA(Sec) per dimer. Requires pyridoxal 5'-phosphate as cofactor.

It is found in the cytoplasm. The catalysed reaction is L-seryl-tRNA(Sec) + selenophosphate + H(+) = L-selenocysteinyl-tRNA(Sec) + phosphate. Its pathway is aminoacyl-tRNA biosynthesis; selenocysteinyl-tRNA(Sec) biosynthesis; selenocysteinyl-tRNA(Sec) from L-seryl-tRNA(Sec) (bacterial route): step 1/1. Its function is as follows. Converts seryl-tRNA(Sec) to selenocysteinyl-tRNA(Sec) required for selenoprotein biosynthesis. The polypeptide is L-seryl-tRNA(Sec) selenium transferase (Escherichia coli (strain 55989 / EAEC)).